The sequence spans 585 residues: Pyruvate kinase (585 aa).

Arg32 provides a ligand contact to substrate. 4 residues coordinate K(+): Asn34, Ser36, Asp66, and Thr67. Asn34–His37 contributes to the ATP binding site. ATP-binding residues include Arg73 and Lys156. Glu221 contributes to the Mg(2+) binding site. Residues Gly244, Asp245, and Thr277 each coordinate substrate. Asp245 contacts Mg(2+).

The protein belongs to the pyruvate kinase family. It in the C-terminal section; belongs to the PEP-utilizing enzyme family. Requires Mg(2+) as cofactor. K(+) serves as cofactor.

It catalyses the reaction pyruvate + ATP = phosphoenolpyruvate + ADP + H(+). Its pathway is carbohydrate degradation; glycolysis; pyruvate from D-glyceraldehyde 3-phosphate: step 5/5. This chain is Pyruvate kinase (pyk), found in Staphylococcus aureus (strain MRSA252).